Consider the following 65-residue polypeptide: Lantipeptide Flvbeta.h (65 aa).

The propeptide at 1-27 (MERYGHLAGVIPVDEIDDMFESNVIGG) is cleaved by FlvT. Position 28 is a 2,3-didehydrobutyrine; by FlvM2 (threonine 28). The segment at residues 29–33 (SSIDC) is a cross-link (lanthionine (Ser-Cys); by FlvM2). Serine 30 is subject to 2,3-didehydroalanine (Ser); by FlvM2. Position 44 is a 2,3-didehydrobutyrine; by FlvM2 (threonine 44). Positions 48–54 (TVRIEFC) form a cross-link, beta-methyllanthionine (Thr-Cys); by FlvM2. Residues 56 to 59 (SAAC) constitute a cross-link (lanthionine (Ser-Cys); by FlvM2). A cross-link (beta-methyllanthionine (Thr-Cys); by FlvM2) is located at residues 60 to 63 (TYSC).

Post-translationally, contains LL-lanthionine, DL-lanthionine, and DL-beta-methyllanthionine, when coepressed in E.coli with the flavecin synthetase FlvM2.

Its subcellular location is the secreted. Functionally, lanthionine-containing peptide that does probably not show antibacterial activity, since its analog [+2]Flvbeta.h does not show antibacterial activity against M.luteus. Also does not show antibiotic activity when tested with [Del2]Flvalpha.a, an analog of Flvalpha.a, which is encoded by the same operon than Flvbeta.h. The bactericidal activity of lantibiotics is based on depolarization of energized bacterial cytoplasmic membranes, initiated by the formation of aqueous transmembrane pores. This chain is Lantipeptide Flvbeta.h, found in Ruminococcus flavefaciens.